The following is a 155-amino-acid chain: Ribosomal RNA large subunit methyltransferase H (155 aa).

Residues leucine 73, glycine 104, and 123–128 (LSPLTL) contribute to the S-adenosyl-L-methionine site.

It belongs to the RNA methyltransferase RlmH family. As to quaternary structure, homodimer.

Its subcellular location is the cytoplasm. The catalysed reaction is pseudouridine(1915) in 23S rRNA + S-adenosyl-L-methionine = N(3)-methylpseudouridine(1915) in 23S rRNA + S-adenosyl-L-homocysteine + H(+). Specifically methylates the pseudouridine at position 1915 (m3Psi1915) in 23S rRNA. This is Ribosomal RNA large subunit methyltransferase H from Pseudomonas syringae pv. tomato (strain ATCC BAA-871 / DC3000).